Consider the following 616-residue polypeptide: ATP-dependent zinc metalloprotease FtsH (616 aa).

Residues 1–8 lie on the Cytoplasmic side of the membrane; it reads MRNLFKTA. The chain crosses the membrane as a helical span at residues 9–29; it reads TIYILIALVILLLVDIFSGGL. The Extracellular portion of the chain corresponds to 30-114; it reads SYNQFFSNLS…VTKEPPQVPW (85 aa). A helical membrane pass occupies residues 115 to 135; it reads WLSTFLPMLIFAGLMIFVWIF. Over 136-616 the chain is Cytoplasmic; sequence MLQQTQGGGS…VFEDAQPQLV (481 aa). 208 to 215 lines the ATP pocket; that stretch reads GPPGTGKT. Histidine 430 contributes to the Zn(2+) binding site. Residue glutamate 431 is part of the active site. 2 residues coordinate Zn(2+): histidine 434 and aspartate 506.

It in the central section; belongs to the AAA ATPase family. The protein in the C-terminal section; belongs to the peptidase M41 family. Homohexamer. Zn(2+) is required as a cofactor.

The protein resides in the cell membrane. Functionally, acts as a processive, ATP-dependent zinc metallopeptidase for both cytoplasmic and membrane proteins. Plays a role in the quality control of integral membrane proteins. The sequence is that of ATP-dependent zinc metalloprotease FtsH from Caldicellulosiruptor bescii (strain ATCC BAA-1888 / DSM 6725 / KCTC 15123 / Z-1320) (Anaerocellum thermophilum).